A 654-amino-acid chain; its full sequence is Polyvinylalcohol dehydrogenase (654 aa).

A signal peptide spans 1–32 (MGSHAWGGAVFSAATLIAFGSVVHASGTVAET). Positions 42–159 (ADQLDGETLY…AANQWNGWST (118 aa)) constitute a Cytochrome c domain. Residues cysteine 55, cysteine 58, and histidine 59 each coordinate heme c.

Belongs to the bacterial PQQ dehydrogenase family. As to quaternary structure, monomer. The cofactor is pyrroloquinoline quinone.

The protein resides in the periplasm. It carries out the reaction a polyvinyl alcohol + 2n Fe(III)-[cytochrome c] = an oxidized polyvinyl alcohol + 2n Fe(II)-[cytochrome c] + 2n H(+). Functionally, catalyzes the oxidation of polyvinyl alcohol (PVA) in the polyvinyl alcohol degradation pathway. The protein is Polyvinylalcohol dehydrogenase (pvadh) of Sphingopyxis sp. (strain 113P3).